Consider the following 336-residue polypeptide: Cytoskeleton protein RodZ (336 aa).

The Cytoplasmic segment spans residues 1-111 (MNTEATHDKT…LGKRRKKRDG (111 aa)). Positions 19 to 71 (LRNAREQLGLSQQAVAERLCLKVSTVRDIEEDKAPADLASTFLRGYIRSYAKL) constitute an HTH cro/C1-type domain. The segment at residues 30–49 (QQAVAERLCLKVSTVRDIEE) is a DNA-binding region (H-T-H motif). Residues 112-132 (WLMSFTWLVLFVVIGLTGAWW) traverse the membrane as a helical; Signal-anchor for type II membrane protein segment. Residues 133-336 (WQNHKAQQEE…TVSAEQSAAQ (204 aa)) are Periplasmic-facing. Over residues 152-164 (AALNNSGNNGAQS) the composition is skewed to low complexity. The interval 152-235 (AALNNSGNNG…TTTGNVNVTQ (84 aa)) is disordered. Composition is skewed to polar residues over residues 165 to 190 (VPLN…TVEP) and 200 to 217 (PDQT…QANV). Low complexity predominate over residues 220 to 235 (APAVTPTTTGNVNVTQ).

The protein belongs to the RodZ family.

It localises to the cell inner membrane. Cytoskeletal protein that is involved in cell-shape control through regulation of the length of the long axis. This Enterobacter sp. (strain 638) protein is Cytoskeleton protein RodZ.